A 271-amino-acid polypeptide reads, in one-letter code: 3-methyl-2-oxobutanoate hydroxymethyltransferase (271 aa).

2 residues coordinate Mg(2+): Asp51 and Asp90. Residues 51–52 (DS), Asp90, and Lys119 each bind 3-methyl-2-oxobutanoate. Glu121 is a binding site for Mg(2+). Glu188 serves as the catalytic Proton acceptor.

This sequence belongs to the PanB family. As to quaternary structure, homodecamer; pentamer of dimers. Mg(2+) serves as cofactor.

The protein resides in the cytoplasm. It carries out the reaction 3-methyl-2-oxobutanoate + (6R)-5,10-methylene-5,6,7,8-tetrahydrofolate + H2O = 2-dehydropantoate + (6S)-5,6,7,8-tetrahydrofolate. Its pathway is cofactor biosynthesis; (R)-pantothenate biosynthesis; (R)-pantoate from 3-methyl-2-oxobutanoate: step 1/2. In terms of biological role, catalyzes the reversible reaction in which hydroxymethyl group from 5,10-methylenetetrahydrofolate is transferred onto alpha-ketoisovalerate to form ketopantoate. In Azoarcus sp. (strain BH72), this protein is 3-methyl-2-oxobutanoate hydroxymethyltransferase.